We begin with the raw amino-acid sequence, 435 residues long: Endosome-associated-trafficking regulator 1 (435 aa).

Phosphoserine occurs at positions 18 and 147. Disordered stretches follow at residues 136 to 185 (ASRH…TGWS) and 225 to 251 (ESLP…PSAD). Residues 173 to 182 (LLDEEEDEDT) are compositionally biased toward acidic residues. The interval 173–198 (LLDEEEDEDTGWSGAYLPSAIEQTHP) is required for interaction with PTPN13. Low complexity predominate over residues 240–250 (SPASPAGSPSA). Phosphoserine is present on residues S243 and S247. A coiled-coil region spans residues 261 to 371 (DRHLRTLQIS…FQRENEALRC (111 aa)).

Belongs to the ENTR1 family. Found in a complex with ENTR1, PTPN13 and GIT1. Interacts with PTPN13 (via the FERM domain). Interacts (via N-terminus) with GIT1 (via N- and C-terminus); this interaction is direct. Interacts with NOD2. Interacts (via N-terminus) with IFT88. Interacts with VPS35. Phosphorylated. As to expression, expressed in the colon (at protein level).

It localises to the cytoplasm. Its subcellular location is the early endosome. The protein localises to the endosome. It is found in the recycling endosome. The protein resides in the midbody. It localises to the cytoskeleton. Its subcellular location is the microtubule organizing center. The protein localises to the centrosome. It is found in the cilium basal body. Functionally, endosome-associated protein that plays a role in membrane receptor sorting, cytokinesis and ciliogenesis. Involved in the endosome-to-plasma membrane trafficking and recycling of SNX27-retromer-dependent cargo proteins, such as GLUT1. Involved in the regulation of cytokinesis; the function may involve PTPN13 and GIT1. Plays a role in the formation of cilia. Involved in cargo protein localization, such as PKD2, at primary cilia. Involved in the presentation of the tumor necrosis factor (TNF) receptor TNFRSF1A on the cell surface, and hence in the modulation of the TNF-induced apoptosis. This is Endosome-associated-trafficking regulator 1 from Homo sapiens (Human).